A 492-amino-acid chain; its full sequence is Bifunctional purine biosynthesis protein PurH (492 aa).

One can recognise an MGS-like domain in the interval 1 to 144 (MKKAILSVSN…KNYKHVTTIV (144 aa)).

The protein belongs to the PurH family.

It carries out the reaction (6R)-10-formyltetrahydrofolate + 5-amino-1-(5-phospho-beta-D-ribosyl)imidazole-4-carboxamide = 5-formamido-1-(5-phospho-D-ribosyl)imidazole-4-carboxamide + (6S)-5,6,7,8-tetrahydrofolate. The enzyme catalyses IMP + H2O = 5-formamido-1-(5-phospho-D-ribosyl)imidazole-4-carboxamide. Its pathway is purine metabolism; IMP biosynthesis via de novo pathway; 5-formamido-1-(5-phospho-D-ribosyl)imidazole-4-carboxamide from 5-amino-1-(5-phospho-D-ribosyl)imidazole-4-carboxamide (10-formyl THF route): step 1/1. It functions in the pathway purine metabolism; IMP biosynthesis via de novo pathway; IMP from 5-formamido-1-(5-phospho-D-ribosyl)imidazole-4-carboxamide: step 1/1. This chain is Bifunctional purine biosynthesis protein PurH, found in Staphylococcus aureus (strain bovine RF122 / ET3-1).